A 324-amino-acid chain; its full sequence is Malate dehydrogenase (324 aa).

NAD(+) contacts are provided by residues 21–26 (GAGRVG) and Asp-45. Substrate is bound by residues Arg-94 and Arg-100. NAD(+)-binding positions include Asn-107 and 130 to 132 (VTN). Positions 132 and 163 each coordinate substrate. His-187 functions as the Proton acceptor in the catalytic mechanism.

Belongs to the LDH/MDH superfamily. MDH type 3 family.

It catalyses the reaction (S)-malate + NAD(+) = oxaloacetate + NADH + H(+). Functionally, catalyzes the reversible oxidation of malate to oxaloacetate. This chain is Malate dehydrogenase, found in Trichormus variabilis (strain ATCC 29413 / PCC 7937) (Anabaena variabilis).